Reading from the N-terminus, the 125-residue chain is MAQVPPSLQDLANRYNQAQAQLQSVLLRKQQYEAELREVDKAISEIEKLPQDAKIFKSVGNFLVQQSRDAALQELKDRKELLELHVKTLAKQESMLREQLEKLKEELNKELAKLRGGQEAAKGGG.

This sequence belongs to the prefoldin subunit beta family. As to quaternary structure, heterohexamer of two alpha and four beta subunits.

It localises to the cytoplasm. In terms of biological role, molecular chaperone capable of stabilizing a range of proteins. Seems to fulfill an ATP-independent, HSP70-like function in archaeal de novo protein folding. This is Prefoldin subunit beta from Pyrobaculum calidifontis (strain DSM 21063 / JCM 11548 / VA1).